We begin with the raw amino-acid sequence, 982 residues long: Mineralocorticoid receptor (982 aa).

Residues 1–601 are modulating; it reads METKGYHSLP…STGSSRPSKI (601 aa). The span at 230–242 shows a compositional bias: polar residues; it reads QGTPLTCSPNVEN. Disordered regions lie at residues 230-328 and 345-375; these read QGTP…AAST and SGTS…PFPK. Residues serine 249, serine 258, serine 282, serine 286, and serine 298 each carry the phosphoserine modification. Residues 258–299 are compositionally biased toward low complexity; sequence SPLSSPLSSMKSSISSPPSHCSVKSPVSSPNNVTPRSSVSSP. A compositionally biased stretch (polar residues) spans 300 to 328; it reads ANINNSRCSVSSPSNTNNRSTLSSPAAST. The span at 345–354 shows a compositional bias: low complexity; that stretch reads SGTSAGSSTS. 8 residues coordinate Zn(2+): cysteine 602, cysteine 605, cysteine 619, cysteine 622, cysteine 638, cysteine 644, cysteine 654, and cysteine 657. 2 NR C4-type zinc fingers span residues 602–622 and 638–662; these read CLVC…CGSC and CAGR…LQKC. The segment at residues 602-667 is a DNA-binding region (nuclear receptor); the sequence is CLVCGDEASG…RLQKCLQAGM (66 aa). Residues 668–723 are hinge; the sequence is NLGARRSKKLGKLKGIHEEQPQQQPPPPPPPPQSPEEGTTYIAPAKEPSVNTALVP. Positions 682–708 are disordered; sequence GIHEEQPQQQPPPPPPPPQSPEEGTTY. Positions 690-701 are enriched in pro residues; the sequence is QQPPPPPPPPQS. In terms of domain architecture, NR LBD spans 724 to 962; it reads QLSAISRALT…EFPAMLVEII (239 aa). Asparagine 768 and glutamine 774 together coordinate 21-hydroxyprogesterone. 2 residues coordinate aldosterone: asparagine 768 and glutamine 774. Progesterone contacts are provided by asparagine 768 and glutamine 774. The important for coactivator binding stretch occupies residues 780-783; that stretch reads KWAK. 21-hydroxyprogesterone contacts are provided by arginine 815 and threonine 943. 2 residues coordinate aldosterone: arginine 815 and threonine 943. Progesterone-binding residues include arginine 815 and threonine 943.

Belongs to the nuclear hormone receptor family. NR3 subfamily. Post-translationally, phosphorylated. As to expression, expressed in hippocampus, being restricted to the more superficial cortical layers.

It is found in the cytoplasm. Its subcellular location is the nucleus. Receptor for both mineralocorticoids (MC) such as aldosterone and glucocorticoids (GC) such as corticosterone or cortisol. Binds to mineralocorticoid response elements (MRE) and transactivates target genes. The effect of MC is to increase ion and water transport and thus raise extracellular fluid volume and blood pressure and lower potassium levels. This is Mineralocorticoid receptor (NR3C2) from Saimiri sciureus (Common squirrel monkey).